The sequence spans 137 residues: Small ribosomal subunit protein uS12 (137 aa).

Disordered regions lie at residues 1-22 (MPTINQLVRKPRKSKVSKSKSP) and 35-57 (ATNNAAPQKRGVATRVGTMTPKK). A compositionally biased stretch (basic residues) spans 9–18 (RKPRKSKVSK). Asp-102 is modified (3-methylthioaspartic acid).

It belongs to the universal ribosomal protein uS12 family. As to quaternary structure, part of the 30S ribosomal subunit. Contacts proteins S8 and S17. May interact with IF1 in the 30S initiation complex.

In terms of biological role, with S4 and S5 plays an important role in translational accuracy. Functionally, interacts with and stabilizes bases of the 16S rRNA that are involved in tRNA selection in the A site and with the mRNA backbone. Located at the interface of the 30S and 50S subunits, it traverses the body of the 30S subunit contacting proteins on the other side and probably holding the rRNA structure together. The combined cluster of proteins S8, S12 and S17 appears to hold together the shoulder and platform of the 30S subunit. This Leuconostoc mesenteroides subsp. mesenteroides (strain ATCC 8293 / DSM 20343 / BCRC 11652 / CCM 1803 / JCM 6124 / NCDO 523 / NBRC 100496 / NCIMB 8023 / NCTC 12954 / NRRL B-1118 / 37Y) protein is Small ribosomal subunit protein uS12.